The primary structure comprises 389 residues: S-adenosylmethionine synthase (389 aa).

His-19 is an ATP binding site. Residue Asp-21 participates in Mg(2+) binding. Glu-47 is a binding site for K(+). L-methionine-binding residues include Glu-60 and Gln-103. The interval 103–113 is flexible loop; sequence QSVDIAQGVDR. ATP is bound by residues 168 to 170, 234 to 235, Asp-243, 249 to 250, Ala-266, and Lys-270; these read DGK, RF, and RK. Asp-243 serves as a coordination point for L-methionine. Lys-274 contacts L-methionine.

This sequence belongs to the AdoMet synthase family. As to quaternary structure, homotetramer; dimer of dimers. Mg(2+) is required as a cofactor. Requires K(+) as cofactor.

It localises to the cytoplasm. It catalyses the reaction L-methionine + ATP + H2O = S-adenosyl-L-methionine + phosphate + diphosphate. It participates in amino-acid biosynthesis; S-adenosyl-L-methionine biosynthesis; S-adenosyl-L-methionine from L-methionine: step 1/1. Its function is as follows. Catalyzes the formation of S-adenosylmethionine (AdoMet) from methionine and ATP. The overall synthetic reaction is composed of two sequential steps, AdoMet formation and the subsequent tripolyphosphate hydrolysis which occurs prior to release of AdoMet from the enzyme. The chain is S-adenosylmethionine synthase from Maridesulfovibrio salexigens (strain ATCC 14822 / DSM 2638 / NCIMB 8403 / VKM B-1763) (Desulfovibrio salexigens).